An 811-amino-acid polypeptide reads, in one-letter code: Probable glutamine--tRNA ligase (811 aa).

Positions Asp190 to Gln217 are disordered. Over residues Gly194–Lys205 the composition is skewed to basic residues. The span at Lys207–Gln217 shows a compositional bias: basic and acidic residues. The 'HIGH' region motif lies at Pro269–His279. ATP-binding positions include Glu270 to Asn272 and His276 to Ala282. Residues Asp302 and Tyr447 each contribute to the L-glutamine site. ATP-binding positions include Thr466, Arg495–Leu496, and Met503–Lys505. Residues Leu502–Arg506 carry the 'KMSKS' region motif.

It belongs to the class-I aminoacyl-tRNA synthetase family.

The protein resides in the cytoplasm. The enzyme catalyses tRNA(Gln) + L-glutamine + ATP = L-glutaminyl-tRNA(Gln) + AMP + diphosphate. In Schizosaccharomyces pombe (strain 972 / ATCC 24843) (Fission yeast), this protein is Probable glutamine--tRNA ligase (qrs1).